The following is a 502-amino-acid chain: ATP synthase subunit alpha (502 aa).

The disordered stretch occupies residues 115–139 (VDGLGPVETTETRPIESPAPGVMDR). Residue 169–176 (GDRQTGKT) coordinates ATP.

The protein belongs to the ATPase alpha/beta chains family. F-type ATPases have 2 components, CF(1) - the catalytic core - and CF(0) - the membrane proton channel. CF(1) has five subunits: alpha(3), beta(3), gamma(1), delta(1), epsilon(1). CF(0) has three main subunits: a(1), b(2) and c(9-12). The alpha and beta chains form an alternating ring which encloses part of the gamma chain. CF(1) is attached to CF(0) by a central stalk formed by the gamma and epsilon chains, while a peripheral stalk is formed by the delta and b chains.

The protein localises to the cell membrane. It carries out the reaction ATP + H2O + 4 H(+)(in) = ADP + phosphate + 5 H(+)(out). Produces ATP from ADP in the presence of a proton gradient across the membrane. The alpha chain is a regulatory subunit. The polypeptide is ATP synthase subunit alpha (Geobacillus thermodenitrificans (strain NG80-2)).